Reading from the N-terminus, the 321-residue chain is Lipoyl synthase (321 aa).

7 residues coordinate [4Fe-4S] cluster: Cys60, Cys65, Cys71, Cys86, Cys90, Cys93, and Ser299. One can recognise a Radical SAM core domain in the interval 72–288 (WEKKHATFMI…ETIGRTKGFL (217 aa)).

This sequence belongs to the radical SAM superfamily. Lipoyl synthase family. [4Fe-4S] cluster is required as a cofactor.

Its subcellular location is the cytoplasm. It carries out the reaction [[Fe-S] cluster scaffold protein carrying a second [4Fe-4S](2+) cluster] + N(6)-octanoyl-L-lysyl-[protein] + 2 oxidized [2Fe-2S]-[ferredoxin] + 2 S-adenosyl-L-methionine + 4 H(+) = [[Fe-S] cluster scaffold protein] + N(6)-[(R)-dihydrolipoyl]-L-lysyl-[protein] + 4 Fe(3+) + 2 hydrogen sulfide + 2 5'-deoxyadenosine + 2 L-methionine + 2 reduced [2Fe-2S]-[ferredoxin]. The protein operates within protein modification; protein lipoylation via endogenous pathway; protein N(6)-(lipoyl)lysine from octanoyl-[acyl-carrier-protein]: step 2/2. Its function is as follows. Catalyzes the radical-mediated insertion of two sulfur atoms into the C-6 and C-8 positions of the octanoyl moiety bound to the lipoyl domains of lipoate-dependent enzymes, thereby converting the octanoylated domains into lipoylated derivatives. In Mesorhizobium japonicum (strain LMG 29417 / CECT 9101 / MAFF 303099) (Mesorhizobium loti (strain MAFF 303099)), this protein is Lipoyl synthase.